Here is a 334-residue protein sequence, read N- to C-terminus: Glutaminase (334 aa).

The substrate site is built by Ser-76, Asn-126, Glu-170, Asn-177, Tyr-201, Tyr-253, and Val-271.

Belongs to the glutaminase family. In terms of assembly, homotetramer.

The enzyme catalyses L-glutamine + H2O = L-glutamate + NH4(+). This is Glutaminase from Nostoc sp. (strain PCC 7120 / SAG 25.82 / UTEX 2576).